The sequence spans 296 residues: Cell division protein DivIB (296 aa).

Topologically, residues 1-25 (MMEDKIIHTPRFDEQRRMRRKKRQR) are cytoplasmic. The chain crosses the membrane as a helical span at residues 26 to 46 (LQLFIFLSIVAIVSLILIYMF). At 47 to 296 (TSISYVKKIS…KELNQVKKNS (250 aa)) the chain is on the extracellular side. Residues 50-118 (SYVKKISVND…NTVSINVEEY (69 aa)) enclose the POTRA domain.

This sequence belongs to the FtsQ/DivIB family. DivIB subfamily.

The protein localises to the cell membrane. In terms of biological role, cell division protein that may be involved in stabilizing or promoting the assembly of the division complex. This Macrococcus caseolyticus (strain JCSC5402) (Macrococcoides caseolyticum) protein is Cell division protein DivIB.